The primary structure comprises 115 residues: Large ribosomal subunit protein bL20c (115 aa).

Belongs to the bacterial ribosomal protein bL20 family.

The protein localises to the plastid. It localises to the chloroplast. Binds directly to 23S ribosomal RNA and is necessary for the in vitro assembly process of the 50S ribosomal subunit. It is not involved in the protein synthesizing functions of that subunit. This chain is Large ribosomal subunit protein bL20c, found in Chlorokybus atmophyticus (Soil alga).